The sequence spans 207 residues: Coiled-coil domain-containing protein 124 homolog (207 aa).

The disordered stretch occupies residues 1 to 90 (MGNPKKRAEK…KAAKKNSSLD (90 aa)). The stretch at 5-71 (KKRAEKAEAA…RLEKEEMESL (67 aa)) forms a coiled coil. Composition is skewed to basic and acidic residues over residues 9-28 (EKAEAAKSRKQDEEKKKKDA) and 41-65 (NKKEQEAEKRKAALERKAERERLEK).

The protein belongs to the CCDC124 family. In terms of assembly, associates with translationally inactive ribosomes in the nonrotated state.

Its subcellular location is the cytoplasm. It is found in the nucleus. In terms of biological role, ribosome-binding protein involved in ribosome hibernation by associating with translationally inactive ribosomes. Required for translational recovery after starvation from stationary phase. May facilitate rapid translation reactivation by stabilizing the recycling-competent state of inactive ribosomes. The polypeptide is Coiled-coil domain-containing protein 124 homolog (Schizosaccharomyces pombe (strain 972 / ATCC 24843) (Fission yeast)).